The chain runs to 163 residues: K88 minor fimbrial subunit FaeF (163 aa).

An N-terminal signal peptide occupies residues 1–22; that stretch reads MKKTMMAAALVLSALSIQSALA.

The protein localises to the fimbrium. Functionally, K88 minor fimbrial subunit, plays an essential role in the biogenesis of the K88 fimbriae. required at some step in the initiation and/or elongation of the K88 fimbriae. The chain is K88 minor fimbrial subunit FaeF (faeF) from Escherichia coli.